A 210-amino-acid polypeptide reads, in one-letter code: Thymidylate kinase (210 aa).

Residue Gly-10–Ser-17 coordinates ATP.

This sequence belongs to the thymidylate kinase family.

It catalyses the reaction dTMP + ATP = dTDP + ADP. Functionally, phosphorylation of dTMP to form dTDP in both de novo and salvage pathways of dTTP synthesis. This is Thymidylate kinase from Pseudomonas aeruginosa (strain UCBPP-PA14).